The following is a 358-amino-acid chain: G-protein coupled receptor 20 (358 aa).

The Extracellular segment spans residues 1 to 48; the sequence is MPSVSPAGPSAGAVPNATAVTTVRTNASGLEVPLFHLFARLDEELHGT. N-linked (GlcNAc...) asparagine glycans are attached at residues Asn16 and Asn26. The chain crosses the membrane as a helical span at residues 49–69; sequence FPGLWLALMAVHGAIFLAGLV. Residues 70–86 lie on the Cytoplasmic side of the membrane; that stretch reads LNGLALYVFCCRTRAKT. Residues 87–107 form a helical membrane-spanning segment; it reads PSVIYTINLVVTDLLVGLSLP. The Extracellular portion of the chain corresponds to 108–125; it reads TRFAVYYGARGCLRCAFP. The helical transmembrane segment at 126-146 threads the bilayer; it reads HVLGYFLNMHCSILFLTCICV. The Cytoplasmic segment spans residues 147-168; the sequence is DRYLAIVRPEGSRRCRQPACAR. The chain crosses the membrane as a helical span at residues 169–189; the sequence is AVCAFVWLAAGAVTLSVLGVT. The Extracellular segment spans residues 190-196; it reads GSRPCCR. Residues 197-217 traverse the membrane as a helical segment; the sequence is VFALTVLEFLLPLLVISVFTG. Over 218–238 the chain is Cytoplasmic; that stretch reads RIMCALSRPGLLHQGRQRRVR. The helical transmembrane segment at 239 to 259 threads the bilayer; it reads AMQLLLTVLIIFLVCFTPFHA. Over 260-275 the chain is Extracellular; that stretch reads RQVAVALWPDMPHHTS. The helical transmembrane segment at 276-296 threads the bilayer; sequence LVVYHVAVTLSSLNSCMDPIV. At 297-358 the chain is on the cytoplasmic side; the sequence is YCFVTSGFQA…TQALANGPEA (62 aa). A disordered region spans residues 315–339; it reads HGEREPSSGDVVSMHRSSKGSGRHH. Basic residues predominate over residues 330-339; the sequence is RSSKGSGRHH.

This sequence belongs to the G-protein coupled receptor 1 family. In terms of tissue distribution, ubiquitous with highest levels in intestinal tissues. In the brain detected in thalamus, putamen, and caudate, but not in frontal cortex, pons and hypothalamus.

Its subcellular location is the cell membrane. Functionally, orphan receptor with constitutive G(i) signaling activity that activate cyclic AMP. This is G-protein coupled receptor 20 (GPR20) from Homo sapiens (Human).